Consider the following 217-residue polypeptide: Glycine betaine/carnitine/choline transport system permease protein OpuCB (217 aa).

The region spanning 19–198 (TGEHLYISLI…ILAIIIDYVL (180 aa)) is the ABC transmembrane type-1 domain. Helical transmembrane passes span 23–43 (LYIS…LGVA), 52–74 (GAVI…AFFI), 84–101 (AIVA…RNTY), 128–148 (LVEI…STIY), 150–170 (IGWA…YIFI), and 180–200 (IIGG…VLAV).

The protein belongs to the binding-protein-dependent transport system permease family. CysTW subfamily. In terms of assembly, the complex is composed of two ATP-binding proteins (OpuCA), two transmembrane proteins (OpuCB and OpuCD) and a solute-binding protein (OpuCC).

The protein resides in the cell membrane. Involved in a high affinity multicomponent binding-protein-dependent transport system for glycine betaine, carnitine and choline; probably responsible for the translocation of the substrate across the membrane. The sequence is that of Glycine betaine/carnitine/choline transport system permease protein OpuCB (opuCB) from Bacillus subtilis (strain 168).